Reading from the N-terminus, the 520-residue chain is Succinyl-CoA:3-ketoacid coenzyme A transferase 2B, mitochondrial (520 aa).

The N-terminal 39 residues, 1–39 (MAALRLLAWALPRGVSALRPRPALPHRLIRRYVSDRSGS), are a transit peptide targeting the mitochondrion. The interval 280–299 (ERLTTRDSKPAPGSKDNDPS) is disordered. Glu-342 functions as the 5-glutamyl coenzyme A thioester intermediate in the catalytic mechanism.

The protein belongs to the 3-oxoacid CoA-transferase family. As to quaternary structure, homodimer. Testis specific. Expressed in late spermatids. Accumulates during spermiogenesis. Also detected in the midpiece of spermatozoa.

The protein localises to the mitochondrion. The enzyme catalyses a 3-oxo acid + succinyl-CoA = a 3-oxoacyl-CoA + succinate. It functions in the pathway ketone metabolism; succinyl-CoA degradation; acetoacetyl-CoA from succinyl-CoA: step 1/1. In terms of biological role, key enzyme for ketone body catabolism. Transfers the CoA moiety from succinate to acetoacetate. Formation of the enzyme-CoA intermediate proceeds via an unstable anhydride species formed between the carboxylate groups of the enzyme and substrate. Probably play and important roles in the energy metabolism of spermatozoa. In Mus musculus (Mouse), this protein is Succinyl-CoA:3-ketoacid coenzyme A transferase 2B, mitochondrial (Oxct2b).